A 34-amino-acid polypeptide reads, in one-letter code: U1-poneritoxin-Na2a (34 aa).

As to expression, expressed by the venom gland.

The protein localises to the secreted. Its function is as follows. May have antimicrobial properties, like most ant linear peptides. The polypeptide is U1-poneritoxin-Na2a (Neoponera apicalis (Ant)).